Here is a 183-residue protein sequence, read N- to C-terminus: Ubiquitin-conjugating enzyme E2-21 kDa (183 aa).

A UBC core domain is found at 17–179; the sequence is TCMSRIVKEY…VKYFLAERER (163 aa). C115 serves as the catalytic Glycyl thioester intermediate.

Belongs to the ubiquitin-conjugating enzyme family.

It is found in the peroxisome. The enzyme catalyses S-ubiquitinyl-[E1 ubiquitin-activating enzyme]-L-cysteine + [E2 ubiquitin-conjugating enzyme]-L-cysteine = [E1 ubiquitin-activating enzyme]-L-cysteine + S-ubiquitinyl-[E2 ubiquitin-conjugating enzyme]-L-cysteine.. Its pathway is protein modification; protein ubiquitination. Functionally, catalyzes the covalent attachment of ubiquitin to other proteins. Essential for peroxisome biogenesis. Required for UBC4-independent ubiquitination of PEX5. This is Ubiquitin-conjugating enzyme E2-21 kDa (PEX4) from Saccharomyces cerevisiae (strain ATCC 204508 / S288c) (Baker's yeast).